The sequence spans 287 residues: Pantothenate synthetase (287 aa).

37–44 lines the ATP pocket; sequence MGALHEGH. Histidine 44 (proton donor) is an active-site residue. Glutamine 68 serves as a coordination point for (R)-pantoate. Glutamine 68 contacts beta-alanine. 154 to 157 provides a ligand contact to ATP; the sequence is GQKD. Glutamine 160 lines the (R)-pantoate pocket. ATP contacts are provided by residues valine 183 and 191 to 194; that span reads LSSR.

It belongs to the pantothenate synthetase family. In terms of assembly, homodimer.

It is found in the cytoplasm. The catalysed reaction is (R)-pantoate + beta-alanine + ATP = (R)-pantothenate + AMP + diphosphate + H(+). It participates in cofactor biosynthesis; (R)-pantothenate biosynthesis; (R)-pantothenate from (R)-pantoate and beta-alanine: step 1/1. Its function is as follows. Catalyzes the condensation of pantoate with beta-alanine in an ATP-dependent reaction via a pantoyl-adenylate intermediate. This Leifsonia xyli subsp. xyli (strain CTCB07) protein is Pantothenate synthetase.